We begin with the raw amino-acid sequence, 240 residues long: NAD-dependent protein deacylase Sir2 (240 aa).

Residues 1–235 (MQVTVLSGAG…PTLLQRLPEL (235 aa)) enclose the Deacetylase sirtuin-type domain. Position 8 to 28 (8 to 28 (GAGISAESGVPTFRDAETGLW)) interacts with NAD(+). Substrate contacts are provided by tyrosine 53 and arginine 56. 86 to 89 (QNID) is an NAD(+) binding site. Histidine 104 functions as the Proton acceptor in the catalytic mechanism. Positions 112, 115, 138, and 140 each coordinate Zn(2+). Residues 177–179 (GTS), 203–205 (NPE), and alanine 221 contribute to the NAD(+) site.

Belongs to the sirtuin family. Class III subfamily. In terms of assembly, interacts with both Ku and LigD; may form a trimeric complex during NHEJ. Zn(2+) is required as a cofactor.

The protein resides in the cytoplasm. The enzyme catalyses N(6)-succinyl-L-lysyl-[protein] + NAD(+) + H2O = 2''-O-succinyl-ADP-D-ribose + nicotinamide + L-lysyl-[protein]. It carries out the reaction N(6)-acetyl-L-lysyl-[protein] + NAD(+) + H2O = 2''-O-acetyl-ADP-D-ribose + nicotinamide + L-lysyl-[protein]. In terms of biological role, NAD-dependent lysine deacetylase and desuccinylase that specifically removes acetyl and succinyl groups on target proteins. Modulates the activities of several proteins which are inactive in their acylated form. Functionally, involved in non-homologous end joining (NHEJ) repair of blunt, 5' overhang and 3' overhang DNA double strand breaks (DSB). Overexpression increases the efficiency of NHEJ of the above DSBs 2-fold with no effect on repair fidelity. In Mycolicibacterium smegmatis (strain ATCC 700084 / mc(2)155) (Mycobacterium smegmatis), this protein is NAD-dependent protein deacylase Sir2 (sir2).